Reading from the N-terminus, the 432-residue chain is Enolase (432 aa).

Position 167 (Gln167) interacts with (2R)-2-phosphoglycerate. Catalysis depends on Glu209, which acts as the Proton donor. Mg(2+)-binding residues include Asp246, Glu291, and Asp318. 4 residues coordinate (2R)-2-phosphoglycerate: Lys343, Arg372, Ser373, and Lys394. The active-site Proton acceptor is the Lys343.

The protein belongs to the enolase family. In terms of assembly, component of the RNA degradosome, a multiprotein complex involved in RNA processing and mRNA degradation. Mg(2+) is required as a cofactor.

It is found in the cytoplasm. Its subcellular location is the secreted. The protein resides in the cell surface. The catalysed reaction is (2R)-2-phosphoglycerate = phosphoenolpyruvate + H2O. The protein operates within carbohydrate degradation; glycolysis; pyruvate from D-glyceraldehyde 3-phosphate: step 4/5. Its function is as follows. Catalyzes the reversible conversion of 2-phosphoglycerate (2-PG) into phosphoenolpyruvate (PEP). It is essential for the degradation of carbohydrates via glycolysis. The polypeptide is Enolase (Buchnera aphidicola subsp. Cinara cedri (strain Cc)).